The sequence spans 196 residues: ATP-dependent Clp protease proteolytic subunit (196 aa).

Catalysis depends on Ser-101, which acts as the Nucleophile. His-126 is a catalytic residue.

The protein belongs to the peptidase S14 family. Component of the chloroplastic Clp protease core complex.

The protein resides in the plastid. Its subcellular location is the chloroplast stroma. It catalyses the reaction Hydrolysis of proteins to small peptides in the presence of ATP and magnesium. alpha-casein is the usual test substrate. In the absence of ATP, only oligopeptides shorter than five residues are hydrolyzed (such as succinyl-Leu-Tyr-|-NHMec, and Leu-Tyr-Leu-|-Tyr-Trp, in which cleavage of the -Tyr-|-Leu- and -Tyr-|-Trp bonds also occurs).. Functionally, cleaves peptides in various proteins in a process that requires ATP hydrolysis. Has a chymotrypsin-like activity. Plays a major role in the degradation of misfolded proteins. This is ATP-dependent Clp protease proteolytic subunit from Nasturtium officinale (Watercress).